Consider the following 113-residue polypeptide: Nucleoid-associated protein P9303_00241 (113 aa).

The disordered stretch occupies residues 90-113 (TTTMKEQMEELTGGLNLNLPGMSD).

It belongs to the YbaB/EbfC family. In terms of assembly, homodimer.

Its subcellular location is the cytoplasm. It is found in the nucleoid. Binds to DNA and alters its conformation. May be involved in regulation of gene expression, nucleoid organization and DNA protection. The sequence is that of Nucleoid-associated protein P9303_00241 from Prochlorococcus marinus (strain MIT 9303).